The following is a 459-amino-acid chain: DNA damage-inducible protein F (459 aa).

The next 12 membrane-spanning stretches (helical) occupy residues Pro2 to Leu22, Leu29 to Val49, Leu63 to Leu83, Leu111 to Leu131, Trp154 to Gln174, Val180 to Gly200, Gly207 to Val227, Leu265 to Ile285, Ala289 to Val309, Ile338 to Leu358, Ile373 to Ile393, and Leu416 to Ala436.

Belongs to the multi antimicrobial extrusion (MATE) (TC 2.A.66.1) family.

It is found in the cell inner membrane. This is DNA damage-inducible protein F (dinF) from Escherichia coli (strain K12).